The primary structure comprises 377 residues: Opsin, blue-sensitive (377 aa).

Topologically, residues 1–56 are extracellular; that stretch reads MLLHNKTLAGKALAFIAEEGYVPSMREKFLGWNVPPEYSDLVHPHWRAFPAPGKHF. The N-linked (GlcNAc...) asparagine glycan is linked to asparagine 5. Residues 57 to 81 form a helical membrane-spanning segment; that stretch reads HIGLAIIYSMLLIMSLVGNCCVIWI. The Cytoplasmic portion of the chain corresponds to 82–93; sequence FSTSKSLRTPSN. The chain crosses the membrane as a helical span at residues 94–119; that stretch reads MFIVSLAIFDIIMAFEMPMLVISSFM. Residues 120–132 lie on the Extracellular side of the membrane; that stretch reads ERMIGWEIGCDVY. A disulfide bridge connects residues cysteine 129 and cysteine 206. A helical membrane pass occupies residues 133–152; that stretch reads SVFGSISGMGQAMTNAAIAF. The Cytoplasmic segment spans residues 153-170; that stretch reads DRYRTISCPIDGRLNSKQ. Residues 171–195 traverse the membrane as a helical segment; the sequence is AAVIIAFTWFWVTPFTVLPLLKVWG. Over 196–219 the chain is Extracellular; sequence RYTTEGFLTTCSFDFLTDDEDTKV. The chain crosses the membrane as a helical span at residues 220-247; sequence FVTCIFIWAYVIPLIFIILFYSRLLSSI. Residues 248-282 are Cytoplasmic-facing; sequence RNHEKMLREQAKKMNVKSLVSNQDKERSAEVRIAK. The chain crosses the membrane as a helical span at residues 283–306; that stretch reads VAFTIFFLFLLAWTPYATVALIGV. Over 307–314 the chain is Extracellular; the sequence is YGNRELLT. A helical transmembrane segment spans residues 315 to 339; that stretch reads PVSTMLPAVFAKTVSCIDPWIYAIN. At lysine 326 the chain carries N6-(retinylidene)lysine. Over 340–377 the chain is Cytoplasmic; that stretch reads HPRYRQELQKRCKWMGIHEPETTSDATSAQTEKIKTDE.

Belongs to the G-protein coupled receptor 1 family. Opsin subfamily. In terms of processing, phosphorylated on some or all of the serine and threonine residues present in the C-terminal region. Expressed in the dorsal region of the retina and sparsely expressed in the ventral region.

It is found in the membrane. In terms of biological role, visual pigments are the light-absorbing molecules that mediate vision. They consist of an apoprotein, opsin, covalently linked to 11-cis-retinal. The polypeptide is Opsin, blue-sensitive (BLOP) (Apis mellifera (Honeybee)).